Reading from the N-terminus, the 706-residue chain is Phenylalanine--tRNA ligase beta subunit, chloroplastic (706 aa).

The region spanning lysine 300–threonine 388 is the B5 domain. Residues aspartate 366, aspartate 372, glutamate 375, and glutamate 376 each coordinate Mg(2+). The FDX-ACB domain maps to serine 612 to arginine 705.

This sequence belongs to the phenylalanyl-tRNA synthetase beta subunit family. Type 1 subfamily. Tetramer of two alpha and two beta subunits. Mg(2+) is required as a cofactor.

Its subcellular location is the plastid. It is found in the chloroplast. It catalyses the reaction tRNA(Phe) + L-phenylalanine + ATP = L-phenylalanyl-tRNA(Phe) + AMP + diphosphate + H(+). The polypeptide is Phenylalanine--tRNA ligase beta subunit, chloroplastic (Phaeodactylum tricornutum (strain CCAP 1055/1)).